The primary structure comprises 329 residues: NADH-quinone oxidoreductase subunit H 1 (329 aa).

8 consecutive transmembrane segments (helical) span residues 12–32 (LAKIALIFFVVLTLAAYLVFA), 78–98 (WLFYLAPAMAAIPAILTFAVI), 120–140 (VGLLFFLALSSIAVYGVALGG), 159–179 (LISYELSMGLSLVPTVMLAGS), 191–211 (GIWFIVYQPLAFVIFLISIAA), 242–262 (LFFVGEYINIIVLGGLATTFF), 270–290 (WLPPFVWFSAKTLAFAFFFIW), and 308–328 (WKVLTPLALVNILVTGWILML).

It belongs to the complex I subunit 1 family. As to quaternary structure, NDH-1 is composed of 14 different subunits. Subunits NuoA, H, J, K, L, M, N constitute the membrane sector of the complex.

Its subcellular location is the cell inner membrane. The enzyme catalyses a quinone + NADH + 5 H(+)(in) = a quinol + NAD(+) + 4 H(+)(out). NDH-1 shuttles electrons from NADH, via FMN and iron-sulfur (Fe-S) centers, to quinones in the respiratory chain. The immediate electron acceptor for the enzyme in this species is believed to be ubiquinone. Couples the redox reaction to proton translocation (for every two electrons transferred, four hydrogen ions are translocated across the cytoplasmic membrane), and thus conserves the redox energy in a proton gradient. This subunit may bind ubiquinone. In Geobacter metallireducens (strain ATCC 53774 / DSM 7210 / GS-15), this protein is NADH-quinone oxidoreductase subunit H 1.